Consider the following 881-residue polypeptide: Dynamin-like GTPase MGM1, mitochondrial (881 aa).

Residues 1 to 59 (MNASPVRLLILRRQLATHPAILYSSPYIKSPLVHLHSRMSNVHRSAHANALSFVITRRS) constitute a mitochondrion transit peptide. Over 60-72 (ISHFPKIISKIIR) the chain is Mitochondrial matrix. The helical; Signal-anchor for type II membrane protein transmembrane segment at 73–92 (LPIYVGGGMAAAGSYIAYKM) threads the bilayer. Over 93 to 881 (EEASSFTKDK…KSYKGVSKNL (789 aa)) the chain is Mitochondrial intermembrane. Residues 145–183 (ATSLDDDESKRQGDPKDDDDEDDDDEDDENDSVDTTQDE) form a disordered region. Residues 160–176 (KDDDDEDDDDEDDENDS) show a composition bias toward acidic residues. In terms of domain architecture, Dynamin-type G spans 207 to 505 (HLTLPSIVVI…LEISMSNALE (299 aa)). The segment at 217 to 224 (GSQSSGKS) is G1 motif. Residues Ser220, Ser221, Gly222, Lys223, Ser224, Ser225, and Gly239 each coordinate GTP. Ser224 lines the Mg(2+) pocket. The segment at 243 to 245 (VTR) is G2 motif. Thr244 and Asp317 together coordinate Mg(2+). The segment at 317-320 (DLPG) is G3 motif. Residues 385-388 (TKLD) form a G4 motif region. 3 residues coordinate GTP: Lys386, Asp388, and Thr415. The interval 414-417 (ITKT) is G5 motif. Residues 668-780 (STADQVENCI…KMLKNKCHST (113 aa)) are paddle region. Cys777 and Cys786 are oxidised to a cystine. Residues 780 to 872 (TIEKDRCPEV…KIDSILVFKK (93 aa)) form the GED domain.

Belongs to the TRAFAC class dynamin-like GTPase superfamily. Dynamin/Fzo/YdjA family. In terms of assembly, oligomeric complex consisting of membrane-bound and soluble forms of MGM1. Associates with FZO1 through interaction with the intermembrane space domain of UGO1 which binds FZO1 through its cytoplasmic domain. Cleavage of the transit peptide by mitochondrial processing protease (MPP) produces a long integral membrane form of MGM1 (l-MGM1). Further processing by the rhomboid protease PCP1 produces a short peripheral membrane form of MGM1 (s-MGM1). Both isoforms are required for full activity.

The protein resides in the mitochondrion inner membrane. It is found in the mitochondrion intermembrane space. It catalyses the reaction GTP + H2O = GDP + phosphate + H(+). Its function is as follows. Dynamin-related GTPase that is essential for normal mitochondrial morphology by mediating fusion of the mitochondrial inner membranes, regulating cristae morphology and maintaining respiratory chain function. Exists in two forms: the transmembrane, long form (Dynamin-like GTPase MGM1, long form; L-MGM1), which is tethered to the inner mitochondrial membrane, and the short soluble form (Dynamin-like GTPase MGM1, short form; S-MGM1), which results from proteolytic cleavage and localizes in the intermembrane space. Both forms (L-MGM1 and S-MGM1) cooperate to catalyze the fusion of the mitochondrial inner membrane. The equilibrium between L-MGM1 and S-MGM1 is essential: excess levels of S-MGM1, following loss of mitochondrial membrane potential, lead to an impaired equilibrium between L-MGM1 and S-MGM1, inhibiting mitochondrial fusion. Plays a role in the maintenance and remodeling of mitochondrial cristae, some invaginations of the mitochondrial inner membrane that provide an increase in the surface area. Probably acts by forming helical filaments at the inside of inner membrane tubes with the shape and dimensions of crista junctions. Constitutes the transmembrane long form (L-MGM1) that plays a central role in mitochondrial inner membrane fusion and cristae morphology. L-MGM1 and the soluble short form (S-MGM1) form higher-order helical assemblies that coordinate the fusion of mitochondrial inner membranes. Inner membrane-anchored L-MGM1 molecules initiate membrane remodeling by recruiting soluble S-MGM1 to rapidly polymerize into a flexible cylindrical scaffold encaging the mitochondrial inner membrane. Once at the membrane surface, the formation of S-MGM1 helices induce bilayer curvature. MGM1 dimerization through the paddle region, which inserts into cardiolipin-containing membrane, promotes GTP hydrolysis and the helical assembly of a flexible MGM1 lattice on the membrane, which drives membrane curvature and mitochondrial fusion. In terms of biological role, constitutes the soluble short form (S-MGM1) generated by cleavage by PCP1, which plays a central role in mitochondrial inner membrane fusion and cristae morphology. The transmembrane long form (L-MGM1) and the S-MGM1 form higher-order helical assemblies that coordinate the fusion of mitochondrial inner membranes. Inner membrane-anchored L-MGM1 molecules initiate membrane remodeling by recruiting soluble S-MGM1 to rapidly polymerize into a flexible cylindrical scaffold encaging the mitochondrial inner membrane. Once at the membrane surface, the formation of S-MGM1 helices induce bilayer curvature. MGM1 dimerization through the paddle region, which inserts into cardiolipin-containing membrane, promotes GTP hydrolysis and the helical assembly of a flexible MGM1 lattice on the membrane, which drives membrane curvature and mitochondrial fusion. Excess levels of S-MGM1 produced by cleavage by PCP1 following stress conditions that induce loss of mitochondrial membrane potential, lead to an impaired equilibrium between L-MGM1 and S-MGM1, thereby inhibiting mitochondrial fusion. In Saccharomyces cerevisiae (strain ATCC 204508 / S288c) (Baker's yeast), this protein is Dynamin-like GTPase MGM1, mitochondrial.